The sequence spans 504 residues: Cytochrome P450 3A16 (504 aa).

Cys-443 contacts heme.

The protein belongs to the cytochrome P450 family. Heme serves as cofactor.

The protein resides in the endoplasmic reticulum membrane. The protein localises to the microsome membrane. The enzyme catalyses an organic molecule + reduced [NADPH--hemoprotein reductase] + O2 = an alcohol + oxidized [NADPH--hemoprotein reductase] + H2O + H(+). Cytochromes P450 are a group of heme-thiolate monooxygenases. In liver microsomes, this enzyme is involved in an NADPH-dependent electron transport pathway. It oxidizes a variety of structurally unrelated compounds, including steroids, fatty acids, and xenobiotics. This Mus musculus (Mouse) protein is Cytochrome P450 3A16 (Cyp3a16).